The following is a 1209-amino-acid chain: Zinc finger protein 804A (1209 aa).

Residues 57–81 form a C2H2-type zinc finger; sequence FYCELCDKQYYKHQEFDNHINSYDH. Over residues 380 to 394 the composition is skewed to basic and acidic residues; sequence VKHNEASTTEVENKN. Disordered stretches follow at residues 380–401 and 792–860; these read VKHN…TLAP and PEEF…MKPQ. The span at 807–819 shows a compositional bias: basic residues; it reads KPKKKRRRKRGRF. 2 stretches are compositionally biased toward basic and acidic residues: residues 826–836 and 848–860; these read LELKENTDYPV and LISE…MKPQ.

This Homo sapiens (Human) protein is Zinc finger protein 804A (ZNF804A).